The sequence spans 256 residues: ATP synthase peripheral stalk subunit b, mitochondrial (256 aa).

The transit peptide at 1-42 (MLSRVVLSAAATAAPCLKNAAALGPGVLQATRAFHTGQPRLA) directs the protein to the mitochondrion. An N6-succinyllysine modification is found at Lys-131. Lys-139, Lys-154, Lys-162, Lys-221, Lys-225, Lys-233, and Lys-244 each carry N6-acetyllysine.

The protein belongs to the eukaryotic ATPase B chain family. In terms of assembly, component of the ATP synthase complex composed at least of ATP5F1A/subunit alpha, ATP5F1B/subunit beta, ATP5MC1/subunit c (homooctomer), MT-ATP6/subunit a, MT-ATP8/subunit 8, ATP5ME/subunit e, ATP5MF/subunit f, ATP5MG/subunit g, ATP5MK/subunit k, ATP5MJ/subunit j, ATP5F1C/subunit gamma, ATP5F1D/subunit delta, ATP5F1E/subunit epsilon, ATP5PF/subunit F6, ATP5PB/subunit b, ATP5PD/subunit d, ATP5PO/subunit OSCP. ATP synthase complex consists of a soluble F(1) head domain (subunits alpha(3) and beta(3)) - the catalytic core - and a membrane F(0) domain - the membrane proton channel (subunits c, a, 8, e, f, g, k and j). These two domains are linked by a central stalk (subunits gamma, delta, and epsilon) rotating inside the F1 region and a stationary peripheral stalk (subunits F6, b, d, and OSCP).

It is found in the mitochondrion. The protein localises to the mitochondrion inner membrane. Its function is as follows. Subunit b, of the mitochondrial membrane ATP synthase complex (F(1)F(0) ATP synthase or Complex V) that produces ATP from ADP in the presence of a proton gradient across the membrane which is generated by electron transport complexes of the respiratory chain. ATP synthase complex consist of a soluble F(1) head domain - the catalytic core - and a membrane F(1) domain - the membrane proton channel. These two domains are linked by a central stalk rotating inside the F(1) region and a stationary peripheral stalk. During catalysis, ATP synthesis in the catalytic domain of F(1) is coupled via a rotary mechanism of the central stalk subunits to proton translocation. In vivo, can only synthesize ATP although its ATP hydrolase activity can be activated artificially in vitro. Part of the complex F(0) domain. Part of the complex F(0) domain and the peripheric stalk, which acts as a stator to hold the catalytic alpha(3)beta(3) subcomplex and subunit a/ATP6 static relative to the rotary elements. This is ATP synthase peripheral stalk subunit b, mitochondrial from Mus musculus (Mouse).